A 420-amino-acid chain; its full sequence is Membrane protein UL43 homolog (420 aa).

The next 11 helical transmembrane spans lie at Ile-58 to Ile-78, Lys-81 to Val-101, Ile-114 to Thr-134, Leu-157 to Thr-177, Leu-181 to Pro-201, Gly-203 to Val-223, Gln-278 to Leu-298, Thr-312 to Pro-332, Ile-343 to Val-363, Leu-364 to Ile-384, and Val-399 to Leu-419.

Belongs to the alphaherpesvirinae HHV-1 UL43 family.

The protein localises to the host membrane. The sequence is that of Membrane protein UL43 homolog (MDV056) from Gallus gallus (Chicken).